The primary structure comprises 174 residues: ATP-dependent protease subunit HslV (174 aa).

Thr2 is an active-site residue. 3 residues coordinate Na(+): Gly157, Asp160, and Thr163.

Belongs to the peptidase T1B family. HslV subfamily. As to quaternary structure, a double ring-shaped homohexamer of HslV is capped on each side by a ring-shaped HslU homohexamer. The assembly of the HslU/HslV complex is dependent on binding of ATP.

Its subcellular location is the cytoplasm. The enzyme catalyses ATP-dependent cleavage of peptide bonds with broad specificity.. Its activity is regulated as follows. Allosterically activated by HslU binding. In terms of biological role, protease subunit of a proteasome-like degradation complex believed to be a general protein degrading machinery. The polypeptide is ATP-dependent protease subunit HslV (Aliivibrio fischeri (strain MJ11) (Vibrio fischeri)).